Reading from the N-terminus, the 232-residue chain is LexA repressor (232 aa).

A DNA-binding region (H-T-H motif) is located at residues 35–55 (IREIGDAAGLQSTSSVAYQLK). A compositionally biased stretch (basic and acidic residues) spans 61–85 (GFLRRDPNKPRAVDVRHLPETESRS). Residues 61 to 104 (GFLRRDPNKPRAVDVRHLPETESRSSKAATQAKSKAPQAGVHDP) form a disordered region. Positions 86 to 99 (SKAATQAKSKAPQA) are enriched in low complexity. Active-site for autocatalytic cleavage activity residues include Ser-156 and Lys-193.

It belongs to the peptidase S24 family. Homodimer.

It carries out the reaction Hydrolysis of Ala-|-Gly bond in repressor LexA.. In terms of biological role, represses a number of genes involved in the response to DNA damage (SOS response), including recA and lexA. In the presence of single-stranded DNA, RecA interacts with LexA causing an autocatalytic cleavage which disrupts the DNA-binding part of LexA, leading to derepression of the SOS regulon and eventually DNA repair. This Corynebacterium glutamicum (strain ATCC 13032 / DSM 20300 / JCM 1318 / BCRC 11384 / CCUG 27702 / LMG 3730 / NBRC 12168 / NCIMB 10025 / NRRL B-2784 / 534) protein is LexA repressor.